Here is a 327-residue protein sequence, read N- to C-terminus: AA9 family lytic polysaccharide monooxygenase G (327 aa).

A signal peptide spans 1 to 20; sequence MKLNLASLCFLASIAPLVSG. H21 and H96 together coordinate Cu(2+). C62 and C185 are disulfide-bonded. O2 is bound at residue H172. Cu(2+) is bound at residue Y182. N-linked (GlcNAc...) asparagine glycosylation is present at N290. A CBM1 domain is found at 291 to 327; it reads GTIKKYYQCGGQGWTGSGSCEAGTSCREWNTWYFQCV.

The protein belongs to the polysaccharide monooxygenase AA9 family. Requires Cu(2+) as cofactor.

The protein resides in the secreted. It catalyses the reaction [(1-&gt;4)-beta-D-glucosyl]n+m + reduced acceptor + O2 = 4-dehydro-beta-D-glucosyl-[(1-&gt;4)-beta-D-glucosyl]n-1 + [(1-&gt;4)-beta-D-glucosyl]m + acceptor + H2O.. In terms of biological role, lytic polysaccharide monooxygenase (LPMO) that depolymerizes crystalline and amorphous polysaccharides via the oxidation of scissile alpha- or beta-(1-4)-glycosidic bonds, yielding C1 or C4 oxidation products. Catalysis by LPMOs requires the reduction of the active-site copper from Cu(II) to Cu(I) by a reducing agent and H(2)O(2) or O(2) as a cosubstrate. The chain is AA9 family lytic polysaccharide monooxygenase G from Aspergillus tamarii.